We begin with the raw amino-acid sequence, 486 residues long: Transcriptional adapter 2-beta (486 aa).

A ZZ-type zinc finger spans residues 4–59; that stretch reads LGKKYCVNCLADVTNLRIRCAECQDIELCPECFSAGAEIGNHRRWHGYQQVDGGRF. Residues C9, C12, C23, C26, C32, C35, H45, and H49 each contribute to the Zn(2+) site. In terms of domain architecture, SANT spans 65–118; sequence EAEGGWTSREEQSLLDAIEQYGFGNWEDMAAHVGASRTPQEVMDHYVSMYIHGN. Disordered regions lie at residues 237–291 and 343–377; these read KKDK…EKGQ and EYEAARHKREKRKENKSIAGSKRGSSGGGGGTAGL. Gly residues-rich tracts occupy residues 247–262 and 367–377; these read GTVGVGGPGGAVGSGS and SSGGGGGTAGL.

It is found in the nucleus. In terms of biological role, transcriptional coactivator. In Danio rerio (Zebrafish), this protein is Transcriptional adapter 2-beta (tada2b).